A 489-amino-acid chain; its full sequence is Valine--tRNA ligase (489 aa).

The 'KMSKS' region motif lies at 482-486 (KMSKS). Residue K485 participates in ATP binding.

This sequence belongs to the class-I aminoacyl-tRNA synthetase family.

The enzyme catalyses tRNA(Val) + L-valine + ATP = L-valyl-tRNA(Val) + AMP + diphosphate. This Trichomonas vaginalis protein is Valine--tRNA ligase (VALS).